A 371-amino-acid chain; its full sequence is Chorismate synthase (371 aa).

Residues Arg48 and Arg54 each coordinate NADP(+). FMN contacts are provided by residues 131–133 (RSS), 245–246 (NA), Gly290, 305–309 (KPTSS), and Arg331.

Belongs to the chorismate synthase family. As to quaternary structure, homotetramer. FMNH2 is required as a cofactor.

It catalyses the reaction 5-O-(1-carboxyvinyl)-3-phosphoshikimate = chorismate + phosphate. Its pathway is metabolic intermediate biosynthesis; chorismate biosynthesis; chorismate from D-erythrose 4-phosphate and phosphoenolpyruvate: step 7/7. Functionally, catalyzes the anti-1,4-elimination of the C-3 phosphate and the C-6 proR hydrogen from 5-enolpyruvylshikimate-3-phosphate (EPSP) to yield chorismate, which is the branch point compound that serves as the starting substrate for the three terminal pathways of aromatic amino acid biosynthesis. This reaction introduces a second double bond into the aromatic ring system. This Mesorhizobium japonicum (strain LMG 29417 / CECT 9101 / MAFF 303099) (Mesorhizobium loti (strain MAFF 303099)) protein is Chorismate synthase.